The following is a 324-amino-acid chain: Aldo-keto reductase family 1 member A1 (324 aa).

S3 is subject to Phosphoserine. NADP(+) is bound by residues 10–19 (GQKMPLIGLG), T20, and W21. S37 is modified (phosphoserine). D44 is a binding site for NADP(+). The Proton donor role is filled by Y49. K126 carries the N6-acetyllysine; alternate modification. K126 carries the N6-succinyllysine; alternate modification. K144 is subject to N6-succinyllysine. The NADP(+) site is built by S161, N162, S210, L212, S214, S215, K262, S263, I264, T265, R268, Q271, and N272. A Phosphoserine modification is found at S210.

Belongs to the aldo/keto reductase family.

It localises to the cytoplasm. It is found in the cytosol. The protein resides in the apical cell membrane. It carries out the reaction a primary alcohol + NADP(+) = an aldehyde + NADPH + H(+). The catalysed reaction is L-gulonate + NADP(+) = aldehydo-D-glucuronate + NADPH + H(+). It catalyses the reaction L-gulono-1,4-lactone + NADP(+) = D-glucurono-3,6-lactone + NADPH + H(+). The enzyme catalyses allyl alcohol + NADP(+) = acrolein + NADPH + H(+). It carries out the reaction glycerol + NADP(+) = D-glyceraldehyde + NADPH + H(+). The catalysed reaction is glycerol + NADP(+) = L-glyceraldehyde + NADPH + H(+). It catalyses the reaction hydroxyacetone + NADP(+) = methylglyoxal + NADPH + H(+). The enzyme catalyses 3-deoxyfructose + NADP(+) = 3-deoxyglucosone + NADPH + H(+). It carries out the reaction (R)-mevalonate + NADP(+) = (R)-mevaldate + NADPH + H(+). The catalysed reaction is S-nitroso-CoA + NADPH + H(+) = sulfinamide-CoA + NADP(+). It catalyses the reaction S-nitrosoglutathione + NADPH + H(+) = S-(hydroxysulfenamide)glutathione + NADP(+). Its function is as follows. Catalyzes the NADPH-dependent reduction of a wide variety of carbonyl-containing compounds to their corresponding alcohols. Displays enzymatic activity towards endogenous metabolites such as aromatic and aliphatic aldehydes, ketones, monosaccharides and bile acids, with a preference for negatively charged substrates, such as glucuronate and succinic semialdehyde. Plays an important role by catalyzing the reduction of D-glucuronic acid and D-glucurono-gamma-lactone. Functions as a detoxifiying enzyme by reducing a range of toxic aldehydes. Reduces methylglyoxal and 3-deoxyglucosone, which are present at elevated levels under hyperglycemic conditions and are cytotoxic. Involved also in the detoxification of lipid-derived aldehydes like acrolein. Plays a role in the activation of procarcinogens, such as polycyclic aromatic hydrocarbon trans-dihydrodiols, and in the metabolism of various xenobiotics and drugs. Also acts as an inhibitor of protein S-nitrosylation by mediating degradation of S-nitroso-coenzyme A (S-nitroso-CoA), a cofactor required to S-nitrosylate proteins. S-nitroso-CoA reductase activity is involved in reprogramming intermediary metabolism in renal proximal tubules, notably by inhibiting protein S-nitrosylation of isoform 2 of PKM (PKM2). Also acts as a S-nitroso-glutathione reductase by catalyzing the NADPH-dependent reduction of S-nitrosoglutathione. Displays no reductase activity towards retinoids. The sequence is that of Aldo-keto reductase family 1 member A1 (AKR1A1) from Cricetulus griseus (Chinese hamster).